We begin with the raw amino-acid sequence, 338 residues long: Lipoate-protein ligase A (338 aa).

Residues 29 to 216 (PATQRVLFLW…AFFAHYGEHV (188 aa)) enclose the BPL/LPL catalytic domain. ATP contacts are provided by residues Arg-71, 76-79 (GAVF), and Lys-134. (R)-lipoate is bound at residue Lys-134.

This sequence belongs to the LplA family. In terms of assembly, monomer.

It is found in the cytoplasm. It carries out the reaction L-lysyl-[lipoyl-carrier protein] + (R)-lipoate + ATP = N(6)-[(R)-lipoyl]-L-lysyl-[lipoyl-carrier protein] + AMP + diphosphate + H(+). It functions in the pathway protein modification; protein lipoylation via exogenous pathway; protein N(6)-(lipoyl)lysine from lipoate: step 1/2. Its pathway is protein modification; protein lipoylation via exogenous pathway; protein N(6)-(lipoyl)lysine from lipoate: step 2/2. Catalyzes both the ATP-dependent activation of exogenously supplied lipoate to lipoyl-AMP and the transfer of the activated lipoyl onto the lipoyl domains of lipoate-dependent enzymes. This is Lipoate-protein ligase A from Escherichia coli O17:K52:H18 (strain UMN026 / ExPEC).